Reading from the N-terminus, the 149-residue chain is uncharacterized protein (149 aa).

At serine 21 the chain carries Phosphoserine. 2 helical membrane passes run 48 to 68 (FMEF…WVLG) and 72 to 92 (VLAA…FQLV). The interval 116 to 149 (AEEVPPPSYPSLEEENEGNEEIEESEEMNTLLSK) is disordered. Positions 127–142 (LEEENEGNEEIEESEE) are enriched in acidic residues.

It localises to the membrane. This is an uncharacterized protein from Schizosaccharomyces pombe (strain 972 / ATCC 24843) (Fission yeast).